Reading from the N-terminus, the 521-residue chain is Cytoplasmic polyadenylation element-binding protein 2 (521 aa).

The span at 1–11 (MNLPQQQPPAA) shows a compositional bias: pro residues. 2 disordered regions span residues 1-35 (MNLPQQQPPAAAPQQPQSRRSPVSPQLQQQHQAAA) and 50-88 (PLLKQSPWSNHQNSGWGTASMSWGAMHGRDHRRSGNMGI). Residues 12-35 (APQQPQSRRSPVSPQLQQQHQAAA) are compositionally biased toward low complexity. Ser-21 bears the Phosphoserine mark. The segment covering 55-70 (SPWSNHQNSGWGTASM) has biased composition (polar residues). 2 consecutive RRM domains span residues 264–355 (RKVF…PWNL) and 372–454 (KTIF…PYVL).

The protein belongs to the RRM CPEB family. In terms of assembly, interacts with TENT2/GLD2. As to expression, expressed in embryo, cerebellum, salivary gland, thymus, heart, liver, lung, spleen, kidney, intestine, ovary and round spermatids. Weakly expressed in granular cells of dentate gyrus and the pyramidal cells of CA3 and CA1 of the hippocampus.

The protein localises to the cytoplasm. Its function is as follows. May play a role in translational regulation of stored mRNAs in transcriptionally inactive haploid spermatids. Binds to poly(U) RNA oligomers. Required for cell cycle progression, specifically for the transition from metaphase to anaphase. This is Cytoplasmic polyadenylation element-binding protein 2 (Cpeb2) from Mus musculus (Mouse).